A 212-amino-acid chain; its full sequence is Pyridoxine/pyridoxamine 5'-phosphate oxidase (212 aa).

Substrate is bound by residues Arg-8–Tyr-11 and Lys-66. Residues Arg-61 to Lys-66, Phe-76 to Thr-77, Arg-82, Lys-83, and Gln-105 each bind FMN. Substrate is bound by residues Tyr-123, Arg-127, and Ser-131. FMN contacts are provided by residues Gln-140–Ser-141 and Trp-185. Residue Arg-191 to His-193 participates in substrate binding. Residue Arg-195 participates in FMN binding.

The protein belongs to the pyridoxamine 5'-phosphate oxidase family. As to quaternary structure, homodimer. FMN serves as cofactor.

It carries out the reaction pyridoxamine 5'-phosphate + O2 + H2O = pyridoxal 5'-phosphate + H2O2 + NH4(+). The catalysed reaction is pyridoxine 5'-phosphate + O2 = pyridoxal 5'-phosphate + H2O2. Its pathway is cofactor metabolism; pyridoxal 5'-phosphate salvage; pyridoxal 5'-phosphate from pyridoxamine 5'-phosphate: step 1/1. The protein operates within cofactor metabolism; pyridoxal 5'-phosphate salvage; pyridoxal 5'-phosphate from pyridoxine 5'-phosphate: step 1/1. Its function is as follows. Catalyzes the oxidation of either pyridoxine 5'-phosphate (PNP) or pyridoxamine 5'-phosphate (PMP) into pyridoxal 5'-phosphate (PLP). In Shewanella frigidimarina (strain NCIMB 400), this protein is Pyridoxine/pyridoxamine 5'-phosphate oxidase.